Reading from the N-terminus, the 314-residue chain is MTASLTTKFLNNTYENPFMNASGVHCMTTQELDELANSKAGAFITKSATTLEREGNPKPRYISVPLGSINSMGLPNEGIDYYLSYVLNRQKEHPDAPAIFFSVAGMSIDENLNLLRKIQDSEFNGITELNLSCPNVPGKPQVAYDFDLTKETLDRVFAFFKKPLGIKLPPYFDFAHFDIMAKILNEFPLAYVNSINSIGNGLFIDVEKESVVVKPKNGFGGIGGEYVKPTALANVRAFYTRLRPEIKVIGTGGIKSGKDAFEHLLCGASMLQIGTELQKEGVKIFERIEKELKDIMEAKGYTSIDQFRGMLNSI.

Substrate-binding positions include Lys46, 70-74 (NSMGL), and Asn130. 46–47 (KS) contacts FMN. Asn130 serves as a coordination point for FMN. Active-site nucleophile residues include Ser132 and Cys133. FMN contacts are provided by Lys167 and Ile195. 196 to 197 (NS) lines the substrate pocket. FMN is bound by residues Gly224, 252–253 (GG), and 274–275 (GT).

The protein belongs to the dihydroorotate dehydrogenase family. Type 1 subfamily. In terms of assembly, homodimer. It depends on FMN as a cofactor.

The protein resides in the cytoplasm. It carries out the reaction (S)-dihydroorotate + fumarate = orotate + succinate. It participates in pyrimidine metabolism; UMP biosynthesis via de novo pathway. Functionally, catalyzes the conversion of dihydroorotate to orotate with fumarate as the electron acceptor. The sequence is that of Dihydroorotate dehydrogenase (fumarate) (URA1) from Saccharomyces paradoxus (Yeast).